Here is a 72-residue protein sequence, read N- to C-terminus: Conotoxin VnMKLT2-021 (72 aa).

A signal peptide spans 1–22 (MKLTCVLIVAVLFLTACQLTTA). A propeptide spanning residues 23-45 (ASYARSERQHPDLGSSDQNSKLT) is cleaved from the precursor. Intrachain disulfides connect Cys48–Cys62, Cys55–Cys66, and Cys61–Cys71.

Belongs to the conotoxin O1 superfamily. Expressed by the venom duct.

It is found in the secreted. The polypeptide is Conotoxin VnMKLT2-021 (Conus ventricosus (Mediterranean cone)).